The following is an 84-amino-acid chain: CDC42 small effector protein 2-A (84 aa).

S-palmitoyl cysteine attachment occurs at residues cysteine 10 and cysteine 11. Residues 29 to 42 (IGEPTNFVHTAHVG) form the CRIB domain.

This sequence belongs to the CDC42SE/SPEC family.

It localises to the cytoplasm. It is found in the cytoskeleton. The protein resides in the cell membrane. Functionally, probably involved in the organization of the actin cytoskeleton by acting downstream of CDC42, inducing actin filament assembly. The protein is CDC42 small effector protein 2-A (cdc42se2-a) of Xenopus laevis (African clawed frog).